A 219-amino-acid polypeptide reads, in one-letter code: Ras-related protein RABA5d (219 aa).

S2 carries the N-acetylserine modification. 19–26 is a GTP binding site; sequence GDSAVGKS. The short motif at 41-49 is the Effector region element; that stretch reads SKATIGVEF. Residues 67–71, 125–128, and 155–156 each bind GTP; these read DTAGQ, NKCD, and SA. Residues C215 and C216 are each lipidated (S-geranylgeranyl cysteine).

It belongs to the small GTPase superfamily. Rab family.

It is found in the cell membrane. Its function is as follows. Intracellular vesicle trafficking and protein transport. The protein is Ras-related protein RABA5d (RABA5D) of Arabidopsis thaliana (Mouse-ear cress).